The chain runs to 336 residues: Oxaloacetate decarboxylase (336 aa).

The 249-residue stretch at 10-258 (PIVLDTTVRD…LAAVDLDRIF (249 aa)) folds into the Pyruvate carboxyltransferase domain. Mn(2+)-binding residues include D19, H197, and H199.

It belongs to the 4-hydroxy-2-oxovalerate aldolase family. As to quaternary structure, homodimer. A divalent metal cation is required as a cofactor.

The enzyme catalyses oxaloacetate + H(+) = pyruvate + CO2. Its activity is regulated as follows. Activity is abolished upon incubation with Chelex and EDTA. Exhibits oxaloacetate decarboxylase activity. Lacks any detectable aldolase activity with 4-hydroxy-2-oxopentanoate (HOPA), 4-hydroxy-2-oxohexanoate (HOHA) or other 4-hydroxy-2-oxoacids. This chain is Oxaloacetate decarboxylase, found in Mycobacterium tuberculosis (strain ATCC 25618 / H37Rv).